We begin with the raw amino-acid sequence, 143 residues long: Large ribosomal subunit protein uL15 (143 aa).

Over residues 1–13 (MIRKKKKVKKIRG) the composition is skewed to basic residues. The tract at residues 1–39 (MIRKKKKVKKIRGSRTCGGGSHKKRRGAGNKGGRGMAGG) is disordered. Residues 29–38 (GNKGGRGMAG) show a composition bias toward gly residues.

It belongs to the universal ribosomal protein uL15 family. In terms of assembly, part of the 50S ribosomal subunit.

In terms of biological role, binds to the 23S rRNA. The sequence is that of Large ribosomal subunit protein uL15 from Methanocaldococcus jannaschii (strain ATCC 43067 / DSM 2661 / JAL-1 / JCM 10045 / NBRC 100440) (Methanococcus jannaschii).